The following is a 1485-amino-acid chain: Chromosome partition protein MukB (1485 aa).

34 to 41 (GGNGAGKS) is a binding site for ATP. 2 coiled-coil regions span residues 311–480 (EMAR…EAYR) and 519–665 (GARL…RLSQ). The interval 666 to 783 (PGGAEDARLI…SLPLFGRAAR (118 aa)) is flexible hinge. 2 coiled-coil regions span residues 832 to 1115 (NDPE…QAKA) and 1209 to 1265 (IDAI…LQSV).

Belongs to the SMC family. MukB subfamily. In terms of assembly, homodimerization via its hinge domain. Binds to DNA via its C-terminal region. Interacts, and probably forms a ternary complex, with MukE and MukF via its C-terminal region. The complex formation is stimulated by calcium or magnesium. Interacts with tubulin-related protein FtsZ.

It localises to the cytoplasm. It is found in the nucleoid. Its function is as follows. Plays a central role in chromosome condensation, segregation and cell cycle progression. Functions as a homodimer, which is essential for chromosome partition. Involved in negative DNA supercoiling in vivo, and by this means organize and compact chromosomes. May achieve or facilitate chromosome segregation by condensation DNA from both sides of a centrally located replisome during cell division. The sequence is that of Chromosome partition protein MukB from Edwardsiella ictaluri (strain 93-146).